Consider the following 539-residue polypeptide: Berberine bridge enzyme-like 21 (539 aa).

Positions 1 to 26 are cleaved as a signal peptide; the sequence is MIATQTFVSVFFFVFFLVSLPFFSSA. A disulfide bond links cysteine 41 and cysteine 104. Asparagine 79 carries N-linked (GlcNAc...) asparagine glycosylation. An FAD-binding PCMH-type domain is found at 82-256; sequence STPKPAIIVT…LGYKVKLVPV (175 aa). The 6-(S-cysteinyl)-8alpha-(pros-histidyl)-FAD (His-Cys) cross-link spans 119–181; sequence HDYEGLSYIS…KVHGFPAGVC (63 aa). Residue asparagine 340 is glycosylated (N-linked (GlcNAc...) asparagine).

The protein belongs to the oxygen-dependent FAD-linked oxidoreductase family. The cofactor is FAD. Post-translationally, the FAD cofactor is bound via a bicovalent 6-S-cysteinyl, 8alpha-N1-histidyl FAD linkage.

It is found in the secreted. The protein resides in the cell wall. The protein is Berberine bridge enzyme-like 21 of Arabidopsis thaliana (Mouse-ear cress).